Here is a 206-residue protein sequence, read N- to C-terminus: Uridine kinase (206 aa).

Position 9–16 (9–16 (GGSGSGKT)) interacts with ATP.

Belongs to the uridine kinase family.

The protein localises to the cytoplasm. It catalyses the reaction uridine + ATP = UMP + ADP + H(+). The catalysed reaction is cytidine + ATP = CMP + ADP + H(+). The protein operates within pyrimidine metabolism; CTP biosynthesis via salvage pathway; CTP from cytidine: step 1/3. Its pathway is pyrimidine metabolism; UMP biosynthesis via salvage pathway; UMP from uridine: step 1/1. This Borrelia turicatae (strain 91E135) protein is Uridine kinase.